Here is a 403-residue protein sequence, read N- to C-terminus: Flavohemoprotein (403 aa).

Residues 1-138 enclose the Globin domain; that stretch reads MLTPEQKAIV…LADLMIGIEK (138 aa). Histidine 85 contributes to the heme b binding site. Active-site charge relay system residues include tyrosine 95 and glutamate 137. Residues 149–403 form a reductase region; it reads GGWRDFRPFR…SQSFAPVILG (255 aa). Residues 152–257 form the FAD-binding FR-type domain; sequence RDFRPFRVAR…HVPAGDFVLQ (106 aa). FAD contacts are provided by residues tyrosine 190 and 206 to 209; that span reads RQYS. 269–274 contacts NADP(+); sequence GVGITP. 390-393 lines the FAD pocket; it reads TFGP.

Belongs to the globin family. Two-domain flavohemoproteins subfamily. The protein in the C-terminal section; belongs to the flavoprotein pyridine nucleotide cytochrome reductase family. The cofactor is heme b. Requires FAD as cofactor.

It carries out the reaction 2 nitric oxide + NADPH + 2 O2 = 2 nitrate + NADP(+) + H(+). The enzyme catalyses 2 nitric oxide + NADH + 2 O2 = 2 nitrate + NAD(+) + H(+). The sequence is that of Flavohemoprotein from Deinococcus radiodurans (strain ATCC 13939 / DSM 20539 / JCM 16871 / CCUG 27074 / LMG 4051 / NBRC 15346 / NCIMB 9279 / VKM B-1422 / R1).